A 257-amino-acid chain; its full sequence is Small ribosomal subunit protein uS15m (257 aa).

A mitochondrion-targeting transit peptide spans 1–57 (MLRAAWRALSSVRVQAVTQAPVPALRARSSASLPSARCGLQTPSLLNAARAYAVQKP). The disordered stretch occupies residues 228-257 (KAAAAAAKKEKRERVPENPSNALPEKTKEN). The segment covering 234–243 (AKKEKRERVP) has biased composition (basic and acidic residues).

The protein belongs to the universal ribosomal protein uS15 family. Component of the mitochondrial ribosome small subunit (28S) which comprises a 12S rRNA and about 30 distinct proteins. Interacts with METTL17.

It is found in the mitochondrion matrix. The chain is Small ribosomal subunit protein uS15m (Mrps15) from Rattus norvegicus (Rat).